A 1346-amino-acid polypeptide reads, in one-letter code: Adhesion G protein-coupled receptor A3 (1346 aa).

A signal peptide spans 1–21 (MSVLCVLLLAFVLPLRGSSSA). The interval 18 to 45 (SSSAGSTECKTYDERSRSAGKSSPSGAT) is disordered. The Extracellular portion of the chain corresponds to 22–739 (GSTECKTYDE…NVFIFRPLHP (718 aa)). 4 LRR repeats span residues 66-90 (FPNRTVSLILSNNKIQELLNGSFVG), 91-114 (LSSLERLDIKNNIITHIEPGAFYG), 116-138 (FSLKRLDLSKNLIGCLHVDVFKG), and 139-162 (LTNLVKLNLSENKFSSLSQGIFDS). Residues 176-223 (LLCDCNLQWLVVWIKEKAIGVKETRCSFPRSLQGQLITTLRAETLTCD) enclose the LRRCT domain. Positions 229 to 327 (PSFQMTPSQH…GNNTRTVHIV (99 aa)) constitute an Ig-like domain. Cysteine 251 and cysteine 311 are joined by a disulfide. 3 LRR repeats span residues 503–529 (LQRIALLRVSNGALAYSTNSPNIALEA), 574–600 (TSNLSALALKNTIVEASLQLPPTLFSS), and 611–632 (VYKLHLLAFRNGKLFPPTGNSS). The region spanning 563-728 (PERQLSFKCN…AVLMDLNRTG (166 aa)) is the GAIN-B domain. The interval 679–728 (PAFWNFSLQGGQGGWQSDGCRILHQDDNFTTVSCHSLNSYAVLMDLNRTG) is GPS. A disulfide bridge connects residues cysteine 698 and cysteine 712. The helical transmembrane segment at 740–760 (VIYSTALVLVLCLLSVIVSYI) threads the bilayer. The Cytoplasmic portion of the chain corresponds to 761–773 (YHHKSVRISKKCW). Residues 774-794 (HMLVNLCLHILLTCAVFVGGI) traverse the membrane as a helical segment. Residues 795-804 (NQTYNASVCQ) lie on the Extracellular side of the membrane. A helical transmembrane segment spans residues 805-825 (AMGIVLHYSTLATALWSGVTA). Over 826–854 (RNIYKQVTRKAKRYEELDEPPPPPRPMLR) the chain is Cytoplasmic. Residues 855 to 875 (FYLIGGGIPIIVCGITAAANI) traverse the membrane as a helical segment. Topologically, residues 876 to 897 (KNYGSQVNAPYCWMAWEPSLGA) are extracellular. The chain crosses the membrane as a helical span at residues 898 to 918 (FYGPAAFIVFVDCMYFLSILI). Residues 919–977 (QLRRHPERRFELKEQSEEQQHLSVTEATEITPVHLESSPTAQPVPMSALENEHTFVSQL) lie on the Cytoplasmic side of the membrane. The chain crosses the membrane as a helical span at residues 978 to 998 (MGVAGSLTLYAALWVFGALAI). Residues 999–1005 (SQEHPAD) are Extracellular-facing. Residues 1006–1026 (LVFACLFGALALGLGAFLVAH) traverse the membrane as a helical segment. Over 1027 to 1346 (HCVNRQDMRR…TGLWKHETTV (320 aa)) the chain is Cytoplasmic. The span at 1157–1169 (SVNNNNLPGNANI) shows a compositional bias: polar residues. Disordered stretches follow at residues 1157–1188 (SVNNNNLPGNANITGHPGRHHKNRSRAHRASR) and 1202–1284 (SVEG…DGSE). 2 stretches are compositionally biased toward basic residues: residues 1173–1187 (PGRHHKNRSRAHRAS) and 1212–1226 (NKRHHHESLHARNSR). Positions 1238 to 1252 (QSQLQQDSSDAASTS) are enriched in low complexity. Over residues 1266–1280 (IGNGFGHGISNGGLL) the composition is skewed to gly residues. A PDZ-binding motif is present at residues 1344 to 1346 (TTV).

This sequence belongs to the G-protein coupled receptor 2 family. Adhesion G-protein coupled receptor (ADGR) subfamily. As to quaternary structure, interacts (via PDZ-binding motif) with disheveled proteins; leading to the localization of dishevelled proteins to specific membrane subdomains. As to expression, ubiquitously expressed at very low levels.

It localises to the cell membrane. Orphan receptor that acts as a critical modulator of planar cell polarity during gastrulation. Controls the localization of dishevelled. The chain is Adhesion G protein-coupled receptor A3 (adgra3) from Danio rerio (Zebrafish).